The sequence spans 54 residues: Conotoxin vc5c (54 aa).

The N-terminal stretch at Val-1–Ala-14 is a signal peptide. Residues Val-15–Arg-43 constitute a propeptide that is removed on maturation. Glu-50 carries the post-translational modification 4-carboxyglutamate. Trp-51 carries the 6'-bromotryptophan modification.

Belongs to the conotoxin T superfamily. Post-translationally, contains 2 disulfide bonds that can be either 'C1-C3, C2-C4' or 'C1-C4, C2-C3', since these disulfide connectivities have been observed for conotoxins with cysteine framework V (for examples, see AC P0DQQ7 and AC P81755). As to expression, expressed by the venom duct.

Its subcellular location is the secreted. In Conus victoriae (Queen Victoria cone), this protein is Conotoxin vc5c.